The sequence spans 311 residues: Vomeronasal type-1 receptor 3 (311 aa).

At 1-5 (MASKD) the chain is on the extracellular side. A helical transmembrane segment spans residues 6–26 (FAIGMILLSQIMVGFLGNFFL). At 27–51 (LYHYSFLCFTRGMLQSTDLILKHLT) the chain is on the cytoplasmic side. A helical transmembrane segment spans residues 52-72 (IANSLVILSKGIPQTMAAFGL). The Extracellular portion of the chain corresponds to 73 to 92 (KDSLSDIGCKFVFYVHRVGR). Residues 93-113 (AVCVGNACLLSVFQVITISPS) form a helical membrane-spanning segment. Over 114-130 (EFRWAELKLHAHKYIRS) the chain is Cytoplasmic. The helical transmembrane segment at 131–151 (FILVLCWILNTLVNITVLLHV) threads the bilayer. Topologically, residues 152-187 (TGKWNSINSTKTNDYGYCSGGSRSRIPHSLHIVLLS) are extracellular. Asn159 carries an N-linked (GlcNAc...) asparagine glycan. A helical membrane pass occupies residues 188 to 208 (SLDVLCLGLMTLASGSMVFIL). Over 209–232 (HRHKQQVQHIHGTNLSARSSPESR) the chain is Cytoplasmic. The helical transmembrane segment at 233-249 (VTQSILVLVSTLCYFTR) threads the bilayer. Over 250–264 (SPPSLHMSLFPNPSW) the chain is Extracellular. Residues 265-285 (WLLNTSALITACFPMVSPFVL) form a helical membrane-spanning segment. The Cytoplasmic portion of the chain corresponds to 286 to 311 (MSRHPRIPRLGSACCGRNPQFPKLVR).

The protein belongs to the G-protein coupled receptor 1 family.

It is found in the cell membrane. Functionally, putative pheromone receptor. This chain is Vomeronasal type-1 receptor 3 (VN1R3), found in Homo sapiens (Human).